Reading from the N-terminus, the 413-residue chain is Serine hydroxymethyltransferase (413 aa).

Residues Leu119 and 123 to 125 contribute to the (6S)-5,6,7,8-tetrahydrofolate site; that span reads GHL. At Lys228 the chain carries N6-(pyridoxal phosphate)lysine. Residue 351 to 353 coordinates (6S)-5,6,7,8-tetrahydrofolate; sequence SPF.

This sequence belongs to the SHMT family. Homodimer. The cofactor is pyridoxal 5'-phosphate.

Its subcellular location is the cytoplasm. The catalysed reaction is (6R)-5,10-methylene-5,6,7,8-tetrahydrofolate + glycine + H2O = (6S)-5,6,7,8-tetrahydrofolate + L-serine. It participates in one-carbon metabolism; tetrahydrofolate interconversion. The protein operates within amino-acid biosynthesis; glycine biosynthesis; glycine from L-serine: step 1/1. Catalyzes the reversible interconversion of serine and glycine with tetrahydrofolate (THF) serving as the one-carbon carrier. This reaction serves as the major source of one-carbon groups required for the biosynthesis of purines, thymidylate, methionine, and other important biomolecules. Also exhibits THF-independent aldolase activity toward beta-hydroxyamino acids, producing glycine and aldehydes, via a retro-aldol mechanism. In Clostridium botulinum (strain Langeland / NCTC 10281 / Type F), this protein is Serine hydroxymethyltransferase.